Consider the following 400-residue polypeptide: SEC14-like protein 3 (400 aa).

The CRAL-TRIO domain maps to 76 to 249 (PPEVIQKYMP…HFGGTLTDPD (174 aa)). Phosphoserine is present on S223. The 109-residue stretch at 275-383 (KTQYEHSVQI…AKKVSFTVEV (109 aa)) folds into the GOLD domain.

In terms of processing, the N-terminus seems to be blocked. Detected in a layer of supportive cells in olfactory epithelium, in the apical region of the trachea and in the surface layer of ciliated bronchial epithelium in the lung.

Probable hydrophobic ligand-binding protein; may play a role in the transport of hydrophobic ligands like tocopherol, squalene and phospholipids. The chain is SEC14-like protein 3 (Sec14l3) from Rattus norvegicus (Rat).